Consider the following 439-residue polypeptide: uncharacterized protein (439 aa).

The region spanning 65-208 (TRPKRVFVLV…VYAFELTTEG (144 aa)) is the DAGKc domain.

This is an uncharacterized protein from Caenorhabditis elegans.